Consider the following 438-residue polypeptide: MPKIVVVGAVAGGATCASQIRRLDKESDIIIFEKDRDMSFANCALPYVIGEVVEDRRYALAYTPEKFYDRKQITVKTYHEVIAINDERQTVSVLNRKTNEQFEESYDKLILSPGASANSLGFESDITFTLRNLEDTDAIDQFIKANQVDKVLVVGAGYVSLEVLENLNERGLHPTLIHRSDKINKLMDADMNQPILDELDKREIPYRLNEEINAINGNEITFKSGKVEHYDMIIEGVGTHPNSKFIESSNIKLDRKGFIPVNDKFETNVPNIYAIGDIATSHYRHVDLPASVPLAWGAHRAASIVAEQIAGNDTIEFKGFLGNNIVKFFDYTFASVGVKPNELKQFDYKMVEVTQGAHANYYPGNSPLHLRVYYDTSNRQILRAAAVGKEGADKRIDVLSMAMMNQLTVDELTEFEVAYAPPYSHPKDLINMIGYKAK.

8 to 33 contacts FAD; the sequence is GAVAGGATCASQIRRLDKESDIIIFE. Residues Thr15, Gln19, Arg22, Ser39, and Asn42 each contribute to the substrate site. Catalysis depends on Cys43, which acts as the Nucleophile. Cys43 acts as the Redox-active in catalysis. A substrate-binding site is contributed by Lys71. Position 151–166 (151–166) interacts with NADP(+); it reads VLVVGAGYVSLEVLEN. 267–277 contacts FAD; that stretch reads TNVPNIYAIGD. His299 contributes to the substrate binding site. Tyr419 lines the FAD pocket. Lys427 provides a ligand contact to substrate.

This sequence belongs to the class-III pyridine nucleotide-disulfide oxidoreductase family. In terms of assembly, homodimer. It depends on FAD as a cofactor.

It carries out the reaction NADP(+) + 2 CoA = CoA-disulfide + NADPH + H(+). Functionally, catalyzes specifically the NADPH-dependent reduction of coenzyme A disulfide. Is also active with other disulfide substrates containing at least one 4'-phosphopantethienyl moiety such as 4,4'-diphosphopantethine, but is not able to reduce oxidized glutathione, cystine, pantethine, or H(2)O(2). The sequence is that of Coenzyme A disulfide reductase (cdr) from Staphylococcus aureus (strain NCTC 8325 / PS 47).